The chain runs to 504 residues: Protein phosphatase 1J (504 aa).

2 disordered regions span residues 1 to 102 (MLNR…RLPW) and 194 to 217 (PLCL…SPQS). A compositionally biased stretch (low complexity) spans 14 to 23 (SSSGTSSQRS). Thr41 is modified (phosphothreonine). A compositionally biased stretch (polar residues) spans 59 to 73 (TAETPVSFSRPTFLQ). 2 positions are modified to phosphoserine: Ser65 and Ser75. In terms of domain architecture, PPM-type phosphatase spans 103–496 (STGYAEVINA…DDISVFVIPL (394 aa)). The segment covering 197-217 (LPSTPGTPGVSSPSQLVSPQS) has biased composition (low complexity).

The protein belongs to the PP2C family. Interacts with UBE2I/UBC9.

It catalyses the reaction O-phospho-L-seryl-[protein] + H2O = L-seryl-[protein] + phosphate. The enzyme catalyses O-phospho-L-threonyl-[protein] + H2O = L-threonyl-[protein] + phosphate. The protein is Protein phosphatase 1J (Ppm1j) of Rattus norvegicus (Rat).